The following is an 87-amino-acid chain: Long neurotoxin LlLong (87 aa).

An N-terminal signal peptide occupies residues 1–20 (KTLLLTLVVVTIICLDFGYT). 5 cysteine pairs are disulfide-bonded: cysteine 23-cysteine 41, cysteine 34-cysteine 62, cysteine 47-cysteine 51, cysteine 66-cysteine 77, and cysteine 78-cysteine 83.

The protein belongs to the three-finger toxin family. Long-chain subfamily. Type II alpha-neurotoxin sub-subfamily. As to expression, expressed by the venom gland.

It localises to the secreted. Its function is as follows. Binds with high affinity to muscular (alpha-1/CHRNA1) and neuronal (alpha-7/CHRNA7) nicotinic acetylcholine receptor (nAChR) and inhibits acetylcholine from binding to the receptor, thereby impairing neuromuscular and neuronal transmission. The sequence is that of Long neurotoxin LlLong from Laticauda laticaudata (Blue-ringed sea krait).